Here is a 353-residue protein sequence, read N- to C-terminus: Serine/threonine-protein kinase SRK2G (353 aa).

A Protein kinase domain is found at 4–260 (YDVVKDLGAG…LKEIKNHPWY (257 aa)). Residues 10–18 (LGAGNFGVA) and Lys33 each bind ATP. Residue Asp123 is the Proton acceptor of the active site. Residues 299–353 (RNPAPSTSAVKSSGSGADEEEEEDVEAEVEEEEDDEDEYEKHVKEAQSCQESDKA) form a disordered region. Over residues 302–313 (APSTSAVKSSGS) the composition is skewed to polar residues. The span at 315-336 (ADEEEEEDVEAEVEEEEDDEDE) shows a compositional bias: acidic residues. Basic and acidic residues predominate over residues 337–353 (YEKHVKEAQSCQESDKA).

The protein belongs to the protein kinase superfamily. Ser/Thr protein kinase family. As to expression, expressed in seedlings.

The protein localises to the nucleus. The catalysed reaction is L-seryl-[protein] + ATP = O-phospho-L-seryl-[protein] + ADP + H(+). It catalyses the reaction L-threonyl-[protein] + ATP = O-phospho-L-threonyl-[protein] + ADP + H(+). The protein is Serine/threonine-protein kinase SRK2G (SRK2G) of Arabidopsis thaliana (Mouse-ear cress).